Consider the following 146-residue polypeptide: D-aminoacyl-tRNA deacylase (146 aa).

The short motif at 137–138 (GP) is the Gly-cisPro motif, important for rejection of L-amino acids element.

Belongs to the DTD family. Homodimer.

The protein localises to the cytoplasm. The enzyme catalyses glycyl-tRNA(Ala) + H2O = tRNA(Ala) + glycine + H(+). It catalyses the reaction a D-aminoacyl-tRNA + H2O = a tRNA + a D-alpha-amino acid + H(+). Functionally, an aminoacyl-tRNA editing enzyme that deacylates mischarged D-aminoacyl-tRNAs. Also deacylates mischarged glycyl-tRNA(Ala), protecting cells against glycine mischarging by AlaRS. Acts via tRNA-based rather than protein-based catalysis; rejects L-amino acids rather than detecting D-amino acids in the active site. By recycling D-aminoacyl-tRNA to D-amino acids and free tRNA molecules, this enzyme counteracts the toxicity associated with the formation of D-aminoacyl-tRNA entities in vivo and helps enforce protein L-homochirality. This chain is D-aminoacyl-tRNA deacylase, found in Anoxybacillus flavithermus (strain DSM 21510 / WK1).